Reading from the N-terminus, the 185-residue chain is Pap fimbrial major pilin protein (185 aa).

Residues 1–22 (MIKSVIAGAVAMAVVSFGVNNA) form the signal peptide. A disulfide bridge connects residues cysteine 44 and cysteine 83.

This sequence belongs to the fimbrial protein family.

The protein localises to the secreted. The protein resides in the fimbrium. Polymerizes to form the thick (6.8 nm in diameter) rod of the pilus (also called fimbria). The rod is a right-handed helical cylinder with 3.28 PapA subunits per turn. Pili are polar filaments radiating from the surface of the bacterium to a length of 0.5-1.5 micrometers and numbering 100-300 per cell, and enable bacteria to colonize the epithelium of specific host organs. The sequence is that of Pap fimbrial major pilin protein (papA) from Escherichia coli.